The sequence spans 473 residues: Chaperone SurA (473 aa).

The first 36 residues, 1 to 36, serve as a signal peptide directing secretion; the sequence is MTNDRLFAGIARVLSVRPLAAALALLLTLPLIGVQA. PpiC domains follow at residues 214–315 and 326–425; these read SLAL…KVIE and ITQT…QVLE.

It localises to the periplasm. It carries out the reaction [protein]-peptidylproline (omega=180) = [protein]-peptidylproline (omega=0). Functionally, chaperone involved in the correct folding and assembly of outer membrane proteins. Recognizes specific patterns of aromatic residues and the orientation of their side chains, which are found more frequently in integral outer membrane proteins. May act in both early periplasmic and late outer membrane-associated steps of protein maturation. This is Chaperone SurA from Polaromonas sp. (strain JS666 / ATCC BAA-500).